A 92-amino-acid chain; its full sequence is Cell division protein FtsB (92 aa).

The Cytoplasmic segment spans residues 1-3 (MRL). A helical membrane pass occupies residues 4-21 (LILILLSVLVLFQYNFWF). Topologically, residues 22–92 (GSNGFLDYRQ…VFYHIVKESK (71 aa)) are periplasmic. The stretch at 28–63 (DYRQNAEKIKENQAENEKLSQRNQRINAEIQGLTKG) forms a coiled coil.

It belongs to the FtsB family. In terms of assembly, part of a complex composed of FtsB, FtsL and FtsQ.

The protein resides in the cell inner membrane. Functionally, essential cell division protein. May link together the upstream cell division proteins, which are predominantly cytoplasmic, with the downstream cell division proteins, which are predominantly periplasmic. The chain is Cell division protein FtsB from Haemophilus influenzae (strain 86-028NP).